Here is a 135-residue protein sequence, read N- to C-terminus: P2Y purinoceptor 4 (135 aa).

Residues 1–25 (VHFSSSVMVLLFGLPFLVTLVCYGL) form a helical membrane-spanning segment. The Cytoplasmic portion of the chain corresponds to 26–49 (MALRLCRPLPGAGQSSSRLRSLRT). The chain crosses the membrane as a helical span at residues 50–72 (IAVVMTVFAVCLVPFHITRTIYY). Over 73 to 90 (LARLLKADCQILNIVNVV) the chain is Extracellular. The chain crosses the membrane as a helical span at residues 91–112 (YKVTRPLASANSCLDPLLYLFT). At 113–135 (GDKYRHQLQRLCRVSAPQRRITA) the chain is on the cytoplasmic side.

It belongs to the G-protein coupled receptor 1 family. Expressed in brain, heart, stria vascularis and vestibular labyrinth.

It localises to the cell membrane. In terms of biological role, receptor for ATP and UTP coupled to G-proteins that activate a phosphatidylinositol-calcium second messenger system. Not activated by UDP. This chain is P2Y purinoceptor 4 (P2RY4), found in Meriones unguiculatus (Mongolian jird).